Consider the following 825-residue polypeptide: Putative pentatricopeptide repeat-containing protein At2g01510 (825 aa).

PPR repeat units follow at residues 47 to 77 (DTCR…MPHK), 78 to 108 (NTVS…MPDR), 109 to 143 (TVVT…SSCT), 146 to 180 (DHVT…GFDT), 183 to 213 (FLTV…IPEK), 214 to 248 (DSVT…GHQP), 249 to 283 (SDFT…GFSR), 284 to 314 (DASV…MPEL), 315 to 349 (DFVS…GFDR), 350 to 384 (RNFP…TADS), 385 to 415 (ILHV…LPQR), 416 to 450 (TTVS…NLRA), 451 to 485 (DQST…GNLE), 486 to 516 (NVFS…MPDR), 517 to 551 (NAVS…GLQP), 552 to 587 (DSVS…GITP), and 588 to 618 (KKKH…MPFE). The type E motif stretch occupies residues 623–699 (MWSSVLNACR…VPAYSWVEVN (77 aa)). The type E(+) motif stretch occupies residues 700–730 (HKIHVFSSNDQTHPNGDEIVRKINELTAEIE). Positions 731–825 (REGYKPDTSS…EGVCSCGDYW (95 aa)) are type DYW motif.

The protein belongs to the PPR family. PCMP-H subfamily.

This chain is Putative pentatricopeptide repeat-containing protein At2g01510 (PCMP-H36), found in Arabidopsis thaliana (Mouse-ear cress).